A 256-amino-acid chain; its full sequence is Triosephosphate isomerase (256 aa).

9-11 provides a ligand contact to substrate; it reads NWK. His94 (electrophile) is an active-site residue. The Proton acceptor role is filled by Glu166. Residues Gly172, Ser211, and 232–233 each bind substrate; that span reads GG.

It belongs to the triosephosphate isomerase family. In terms of assembly, homodimer.

It localises to the cytoplasm. The catalysed reaction is D-glyceraldehyde 3-phosphate = dihydroxyacetone phosphate. Its pathway is carbohydrate biosynthesis; gluconeogenesis. It functions in the pathway carbohydrate degradation; glycolysis; D-glyceraldehyde 3-phosphate from glycerone phosphate: step 1/1. Its function is as follows. Involved in the gluconeogenesis. Catalyzes stereospecifically the conversion of dihydroxyacetone phosphate (DHAP) to D-glyceraldehyde-3-phosphate (G3P). The protein is Triosephosphate isomerase of Natranaerobius thermophilus (strain ATCC BAA-1301 / DSM 18059 / JW/NM-WN-LF).